Consider the following 343-residue polypeptide: Geranylgeranyl pyrophosphate synthase 1 (343 aa).

Positions 43, 46, and 75 each coordinate isopentenyl diphosphate. Mg(2+) contacts are provided by aspartate 82 and aspartate 86. Arginine 91 lines the dimethylallyl diphosphate pocket. Arginine 92 contributes to the isopentenyl diphosphate binding site. Residues lysine 169, threonine 170, and glutamine 212 each coordinate dimethylallyl diphosphate. Aspartate 215 serves as a coordination point for Mg(2+). The dimethylallyl diphosphate site is built by asparagine 219, lysine 229, and lysine 239.

Belongs to the FPP/GGPP synthase family. It depends on Mg(2+) as a cofactor.

It carries out the reaction isopentenyl diphosphate + dimethylallyl diphosphate = (2E)-geranyl diphosphate + diphosphate. It catalyses the reaction isopentenyl diphosphate + (2E)-geranyl diphosphate = (2E,6E)-farnesyl diphosphate + diphosphate. The enzyme catalyses isopentenyl diphosphate + (2E,6E)-farnesyl diphosphate = (2E,6E,10E)-geranylgeranyl diphosphate + diphosphate. Functionally, geranylgeranyl pyrophosphate synthase; part of the gene cluster 4 that mediates the biosynthesis of an isoprenoid secondary metabolite. This Zymoseptoria tritici (strain CBS 115943 / IPO323) (Speckled leaf blotch fungus) protein is Geranylgeranyl pyrophosphate synthase 1 (GGS1).